A 585-amino-acid polypeptide reads, in one-letter code: Archaeosine synthase (585 aa).

The PUA domain maps to 516–584 (TKTVEIDGFV…IGVEIRHVEE (69 aa)).

It belongs to the archaeosine synthase type 1 family. As to quaternary structure, homodimer.

It carries out the reaction 7-cyano-7-carbaguanosine(15) in tRNA + L-glutamine + H2O = archaeosine(15) in tRNA + L-glutamate. The protein operates within tRNA modification; archaeosine-tRNA biosynthesis. Is responsible for the final step in the biosynthesis of archaeosine, a modified nucleoside present in the dihydrouridine loop (D-loop) of archaeal tRNA. Catalyzes the conversion of 7-cyano-7-deazaguanine (preQ0)-modified tRNA to archaeosine-tRNA, transforming a nitrile group to a formamidine group. The protein is Archaeosine synthase of Haloferax volcanii (strain ATCC 29605 / DSM 3757 / JCM 8879 / NBRC 14742 / NCIMB 2012 / VKM B-1768 / DS2) (Halobacterium volcanii).